Consider the following 269-residue polypeptide: uncharacterized protein (269 aa).

The RPE1 insert domain maps to 152 to 197; sequence RYFSKPAYRNAFKANTIRATTAYKKVFNDPSLGSTYPLEVPLGKMS.

This is an uncharacterized protein from Rickettsia prowazekii (strain Madrid E).